The chain runs to 333 residues: MKIGVIGAGSWGTALANVVAANGHDTTLWAYEPELVTGMAATRVNHLFLPGIELHPGLNYTGALAEAVSGAELVLLVTPTQVMRNLLADLAGSIAPTAILASASKGIELGTLCTVSQICCQVLGDAVRERFVALSGPTFAKEVALGLPSLIVAGSANDAAAHTVQAAFSNPVFRVYTSDDAIGVELGGAVKNVIAIAAGISDGLGFGHNTRAALITRGLAEMKRLGRAMGAQDATFAGLAGMGDLVLTCTGDLSRNRTVGVKLGQGLTLEVIMAEMRMVAEGVKSAESVNALAQKLGVEMPITQKVYEILYGNKPARQAVLELMSRDLKPEQA.

Positions 10, 11, and 105 each coordinate NADPH. Lys105, Gly136, and Thr138 together coordinate sn-glycerol 3-phosphate. Position 140 (Ala140) interacts with NADPH. Residues Lys191, Asp244, Ser254, Arg255, and Asn256 each coordinate sn-glycerol 3-phosphate. Lys191 functions as the Proton acceptor in the catalytic mechanism. Position 255 (Arg255) interacts with NADPH. Residues Val279 and Glu281 each coordinate NADPH.

It belongs to the NAD-dependent glycerol-3-phosphate dehydrogenase family.

The protein resides in the cytoplasm. The catalysed reaction is sn-glycerol 3-phosphate + NAD(+) = dihydroxyacetone phosphate + NADH + H(+). It carries out the reaction sn-glycerol 3-phosphate + NADP(+) = dihydroxyacetone phosphate + NADPH + H(+). It functions in the pathway membrane lipid metabolism; glycerophospholipid metabolism. Functionally, catalyzes the reduction of the glycolytic intermediate dihydroxyacetone phosphate (DHAP) to sn-glycerol 3-phosphate (G3P), the key precursor for phospholipid synthesis. The protein is Glycerol-3-phosphate dehydrogenase [NAD(P)+] of Trichlorobacter lovleyi (strain ATCC BAA-1151 / DSM 17278 / SZ) (Geobacter lovleyi).